The chain runs to 144 residues: Large ribosomal subunit protein uL15 (144 aa).

A disordered region spans residues Met-1 to Leu-57. Residues Arg-21 to Ser-31 are compositionally biased toward gly residues.

The protein belongs to the universal ribosomal protein uL15 family. As to quaternary structure, part of the 50S ribosomal subunit.

Its function is as follows. Binds to the 23S rRNA. In Dichelobacter nodosus (strain VCS1703A), this protein is Large ribosomal subunit protein uL15.